The sequence spans 178 residues: Ribosome maturation factor RimP (178 aa).

It belongs to the RimP family.

The protein resides in the cytoplasm. In terms of biological role, required for maturation of 30S ribosomal subunits. In Streptococcus pyogenes serotype M18 (strain MGAS8232), this protein is Ribosome maturation factor RimP.